The primary structure comprises 424 residues: STAM-binding protein (424 aa).

The interval 1 to 127 (MSDHGDVSLP…YEQYKERKKK (127 aa)) is interaction with CHMP3. A phosphoserine mark is found at S2 and S48. The segment at 227-231 (PAKPP) is interaction with STAM. A Phosphoserine modification is found at S243. Residues 257–388 (IVVPRNLCSE…LTDYGLQEIS (132 aa)) form the MPN domain. The Zn(2+) site is built by H335, H337, D348, H350, C390, H396, and H398. A JAMM motif motif is present at residues 335 to 348 (HTHPTQTAFLSSVD).

It belongs to the peptidase M67C family. Interacts with STAM. Interacts with SMAD6 and SMAD7. Interacts with CHMP3; the interaction appears to relieve the autoinhibition of CHMP3. Interacts with SMURF2 and RNF11; this interaction promotes ubiquitination. The cofactor is Zn(2+). Phosphorylated after BMP type I receptor activation. Post-translationally, ubiquitinated by SMURF2 in the presence of RNF11. In terms of tissue distribution, expressed in brain.

Its subcellular location is the nucleus. The protein localises to the membrane. It is found in the cytoplasm. It localises to the early endosome. With respect to regulation, inhibited by N-ethylmaleimide. Its function is as follows. Zinc metalloprotease that specifically cleaves 'Lys-63'-linked polyubiquitin chains. Does not cleave 'Lys-48'-linked polyubiquitin chains. Plays a role in signal transduction for cell growth and MYC induction mediated by IL-2 and GM-CSF. Potentiates BMP (bone morphogenetic protein) signaling by antagonizing the inhibitory action of SMAD6 and SMAD7. Has a key role in regulation of cell surface receptor-mediated endocytosis and ubiquitin-dependent sorting of receptors to lysosomes. Endosomal localization of STAMBP is required for efficient EGFR degradation but not for its internalization. Involved in the negative regulation of PI3K-AKT-mTOR and RAS-MAP signaling pathways. The polypeptide is STAM-binding protein (Stambp) (Mus musculus (Mouse)).